Consider the following 420-residue polypeptide: Glucose-1-phosphate adenylyltransferase (420 aa).

Residues Tyr107, Gly173, 188–189, and Ser206 each bind alpha-D-glucose 1-phosphate; that span reads EK.

Belongs to the bacterial/plant glucose-1-phosphate adenylyltransferase family. As to quaternary structure, homotetramer.

The catalysed reaction is alpha-D-glucose 1-phosphate + ATP + H(+) = ADP-alpha-D-glucose + diphosphate. It participates in glycan biosynthesis; glycogen biosynthesis. Functionally, involved in the biosynthesis of ADP-glucose, a building block required for the elongation reactions to produce glycogen. Catalyzes the reaction between ATP and alpha-D-glucose 1-phosphate (G1P) to produce pyrophosphate and ADP-Glc. This chain is Glucose-1-phosphate adenylyltransferase, found in Shewanella sp. (strain ANA-3).